Here is a 628-residue protein sequence, read N- to C-terminus: UvrABC system protein C (628 aa).

The 80-residue stretch at 21–100 folds into the GIY-YIG domain; sequence TGPGIYQFKN…IKELKPRYNV (80 aa). Residues 214-249 form the UVR domain; it reads AGLLKELHEKMLTAAAELRFEEAAELKMQLQSLRRY.

This sequence belongs to the UvrC family. Interacts with UvrB in an incision complex.

It localises to the cytoplasm. The UvrABC repair system catalyzes the recognition and processing of DNA lesions. UvrC both incises the 5' and 3' sides of the lesion. The N-terminal half is responsible for the 3' incision and the C-terminal half is responsible for the 5' incision. The chain is UvrABC system protein C from Chlorobium luteolum (strain DSM 273 / BCRC 81028 / 2530) (Pelodictyon luteolum).